The chain runs to 102 residues: Large ribosomal subunit protein eL30 (102 aa).

Belongs to the eukaryotic ribosomal protein eL30 family. In terms of assembly, part of the 50S ribosomal subunit.

The chain is Large ribosomal subunit protein eL30 from Thermococcus kodakarensis (strain ATCC BAA-918 / JCM 12380 / KOD1) (Pyrococcus kodakaraensis (strain KOD1)).